The primary structure comprises 426 residues: D-tagatose-1,6-bisphosphate aldolase subunit KbaZ (426 aa).

It belongs to the GatZ/KbaZ family. KbaZ subfamily. In terms of assembly, forms a complex with KbaY.

Its pathway is carbohydrate metabolism; D-tagatose 6-phosphate degradation; D-glyceraldehyde 3-phosphate and glycerone phosphate from D-tagatose 6-phosphate: step 2/2. Component of the tagatose-1,6-bisphosphate aldolase KbaYZ that is required for full activity and stability of the Y subunit. Could have a chaperone-like function for the proper and stable folding of KbaY. When expressed alone, KbaZ does not show any aldolase activity. This Escherichia coli O6:K15:H31 (strain 536 / UPEC) protein is D-tagatose-1,6-bisphosphate aldolase subunit KbaZ.